A 1382-amino-acid chain; its full sequence is DNA-directed RNA polymerase subunit beta (1382 aa).

The protein belongs to the RNA polymerase beta chain family. The RNAP catalytic core consists of 2 alpha, 1 beta, 1 beta' and 1 omega subunit. When a sigma factor is associated with the core the holoenzyme is formed, which can initiate transcription.

It carries out the reaction RNA(n) + a ribonucleoside 5'-triphosphate = RNA(n+1) + diphosphate. Its function is as follows. DNA-dependent RNA polymerase catalyzes the transcription of DNA into RNA using the four ribonucleoside triphosphates as substrates. This chain is DNA-directed RNA polymerase subunit beta, found in Paracoccus denitrificans (strain Pd 1222).